The primary structure comprises 46 residues: PhoP/PhoQ regulator MgrB (46 aa).

A helical membrane pass occupies residues 6–26 (WVALVVVVLACLLLWAQVFNM).

The protein belongs to the MgrB family. As to quaternary structure, may form homooligomers. Probably interacts with the periplasmic domain of PhoQ.

It localises to the cell inner membrane. In terms of biological role, phoP-regulated transcription is redox-sensitive, being activated when the periplasm becomes more reducing. MgrB acts between DsbA/DsbB and PhoP/PhoQ in this pathway. Represses PhoP/PhoQ signaling, possibly by binding to the periplasmic domain of PhoQ, altering its activity and that of downstream effector PhoP. This is PhoP/PhoQ regulator MgrB from Escherichia coli O6:K15:H31 (strain 536 / UPEC).